The sequence spans 93 residues: FMRFamide-like neuropeptides 22 (93 aa).

A signal peptide spans 1–19; that stretch reads MNRSMIALCVVLMVSLVSA. A propeptide spanning residues 20 to 46 is cleaved from the precursor; sequence QVFDLDGQQLAGLEQNDARLMEQQVKR. A phenylalanine amide mark is found at Phe55, Phe67, and Phe79. Residues 83–93 constitute a propeptide that is removed on maturation; the sequence is SGAEAVSEQDY.

Belongs to the FARP (FMRFamide related peptide) family.

The protein localises to the secreted. FMRFamides and FMRFamide-like peptides are neuropeptides. In terms of biological role, SPSAKWMRF-amide: Acts as a ligand for the npr-22 receptor in vitro. The polypeptide is FMRFamide-like neuropeptides 22 (Caenorhabditis elegans).